The chain runs to 261 residues: Carnitinyl-CoA dehydratase (261 aa).

The Nucleophile role is filled by Glu-111. Glu-131 acts as the Proton acceptor in catalysis.

Belongs to the enoyl-CoA hydratase/isomerase family.

It carries out the reaction (R)-carnitinyl-CoA = crotonobetainyl-CoA + H2O. It participates in amine and polyamine metabolism; carnitine metabolism. Catalyzes the reversible dehydration of L-carnitinyl-CoA to crotonobetainyl-CoA. This Citrobacter koseri (strain ATCC BAA-895 / CDC 4225-83 / SGSC4696) protein is Carnitinyl-CoA dehydratase.